A 148-amino-acid polypeptide reads, in one-letter code: Short form salivary protein D7S1 (148 aa).

A signal peptide spans 1–21; it reads MKQNVFFLIAYFSLVFCMCNA. 3 disulfide bridges follow: Cys-28/Cys-61, Cys-41/Cys-147, and Cys-103/Cys-119.

It belongs to the PBP/GOBP family. Female salivary gland.

Its subcellular location is the secreted. In contrast to the related D7 salivary proteins that can bind biogenic amines, does not bind serotonin. The polypeptide is Short form salivary protein D7S1 (Aedes aegypti (Yellowfever mosquito)).